A 209-amino-acid chain; its full sequence is ATP-dependent Clp protease proteolytic subunit 2 (209 aa).

Ser-106 acts as the Nucleophile in catalysis. The active site involves His-131.

The protein belongs to the peptidase S14 family. Fourteen ClpP subunits assemble into 2 heptameric rings which stack back to back to give a disk-like structure with a central cavity, resembling the structure of eukaryotic proteasomes.

The protein resides in the cytoplasm. The catalysed reaction is Hydrolysis of proteins to small peptides in the presence of ATP and magnesium. alpha-casein is the usual test substrate. In the absence of ATP, only oligopeptides shorter than five residues are hydrolyzed (such as succinyl-Leu-Tyr-|-NHMec, and Leu-Tyr-Leu-|-Tyr-Trp, in which cleavage of the -Tyr-|-Leu- and -Tyr-|-Trp bonds also occurs).. Cleaves peptides in various proteins in a process that requires ATP hydrolysis. Has a chymotrypsin-like activity. Plays a major role in the degradation of misfolded proteins. This chain is ATP-dependent Clp protease proteolytic subunit 2, found in Mesorhizobium japonicum (strain LMG 29417 / CECT 9101 / MAFF 303099) (Mesorhizobium loti (strain MAFF 303099)).